Consider the following 189-residue polypeptide: MKSTFRPALVIFAMLTLICGVIYPYAITGIGKLVFPGQAEGSLVTQNGAAVGSSLIGQAFTSPQYFWGRPSATGPMPNNASASGGSNLGPTNPALLDAVKGRIDALKAADPGNTAAVPVDLVTASGSGLDPEISVAAAYYQMPRVARERKMAVEEVKAMIDRISQPQYMGFFGENRVNVLTLNLALDQR.

Residues valine 10–isoleucine 30 traverse the membrane as a helical segment.

This sequence belongs to the KdpC family. As to quaternary structure, the system is composed of three essential subunits: KdpA, KdpB and KdpC.

The protein localises to the cell inner membrane. Its function is as follows. Part of the high-affinity ATP-driven potassium transport (or Kdp) system, which catalyzes the hydrolysis of ATP coupled with the electrogenic transport of potassium into the cytoplasm. This subunit acts as a catalytic chaperone that increases the ATP-binding affinity of the ATP-hydrolyzing subunit KdpB by the formation of a transient KdpB/KdpC/ATP ternary complex. This chain is Potassium-transporting ATPase KdpC subunit, found in Janthinobacterium sp. (strain Marseille) (Minibacterium massiliensis).